Reading from the N-terminus, the 163-residue chain is Superoxide dismutase [Mn] (163 aa).

Mn(2+) is bound by residues H2, H50, D134, and H138.

It belongs to the iron/manganese superoxide dismutase family. Mn(2+) is required as a cofactor.

It catalyses the reaction 2 superoxide + 2 H(+) = H2O2 + O2. Destroys superoxide anion radicals which are normally produced within the cells and which are toxic to biological systems. This Mycobacterium scrofulaceum protein is Superoxide dismutase [Mn] (sodA).